Consider the following 310-residue polypeptide: MAGMQLDEIIEYLRYSKHIPEETIYELCLKCQELLVNESNVTHVDTPVTICGDIHGQLHDLLTLFEKSEGIEKNRFIFLGDFVDRGFYSLESFLLLLCYKLRYPDRITLIRGNHETRQITKVYGFYDEVIRKYGNSNVWRYCCEVFDYLSLGAIINGQIFCVHGGLSPDVMTVDEIRSIDRKQEVPHEGAMCDLLWSDPDEVDTWSLSPRGAGFLFGKNEVDQFLHRNDISLIARAHQLVMEGYKEMFDGGLVTVWSAPNYCYRCGNVAAVLRIDDDLSRNYTIFEAVPAQDNRGNAIIPTKKPQMDYFL.

The Mn(2+) site is built by Asp-53, His-55, Asp-81, and Asn-113. The active-site Proton donor is His-114. Mn(2+) contacts are provided by His-163 and His-237. Leu-310 carries the leucine methyl ester modification.

This sequence belongs to the PPP phosphatase family. PP-4 (PP-X) subfamily. As to quaternary structure, catalytic subunit of the histone H2A phosphatase complex (HTP-C) containing PPH3, PSY2 and PSY4. Mn(2+) is required as a cofactor.

The protein localises to the cytoplasm. It is found in the nucleus. It catalyses the reaction O-phospho-L-seryl-[protein] + H2O = L-seryl-[protein] + phosphate. The catalysed reaction is O-phospho-L-threonyl-[protein] + H2O = L-threonyl-[protein] + phosphate. Involved in the dephosphorylation and activation of the transcription factor GLN3 in response to nutrient availability. Forms the histone H2A phosphatase complex in association with the regulatory subunits PSY2 and PSY4, which dephosphorylates H2AS128ph (gamma-H2A) that has been displaced from sites of DNA lesions in the double-stranded DNA break repair process. Dephosphorylation is necessary for efficient recovery from the DNA damage checkpoint. This Eremothecium gossypii (strain ATCC 10895 / CBS 109.51 / FGSC 9923 / NRRL Y-1056) (Yeast) protein is Serine/threonine-protein phosphatase 4 catalytic subunit (PPH3).